We begin with the raw amino-acid sequence, 306 residues long: UDP-N-acetylenolpyruvoylglucosamine reductase (306 aa).

One can recognise an FAD-binding PCMH-type domain in the interval 28 to 194; the sequence is KIGNISKLFL…LKTELNLKKE (167 aa). The active-site Proton donor is the Ser-223. The active site involves Glu-295.

It belongs to the MurB family. The cofactor is FAD.

It is found in the cytoplasm. It carries out the reaction UDP-N-acetyl-alpha-D-muramate + NADP(+) = UDP-N-acetyl-3-O-(1-carboxyvinyl)-alpha-D-glucosamine + NADPH + H(+). The protein operates within cell wall biogenesis; peptidoglycan biosynthesis. Functionally, cell wall formation. This is UDP-N-acetylenolpyruvoylglucosamine reductase from Borrelia garinii subsp. bavariensis (strain ATCC BAA-2496 / DSM 23469 / PBi) (Borreliella bavariensis).